A 204-amino-acid polypeptide reads, in one-letter code: Ribosome maturation factor RimP (204 aa).

Residues 176 to 204 (GNFDESQFDEIEESEGEEADEAEQPPTKH) are disordered. Acidic residues predominate over residues 181–198 (SQFDEIEESEGEEADEAE).

It belongs to the RimP family.

Its subcellular location is the cytoplasm. In terms of biological role, required for maturation of 30S ribosomal subunits. This Cereibacter sphaeroides (strain KD131 / KCTC 12085) (Rhodobacter sphaeroides) protein is Ribosome maturation factor RimP.